The chain runs to 450 residues: L-galactonate dehydratase (450 aa).

Residue lysine 221 is part of the active site. Mg(2+) is bound by residues aspartate 251, glutamate 277, and glutamate 306. Histidine 356 is a catalytic residue.

This sequence belongs to the mandelate racemase/muconate lactonizing enzyme family. The cofactor is Mg(2+).

It carries out the reaction L-galactonate = 2-dehydro-3-deoxy-L-galactonate + H2O. The protein operates within carbohydrate acid metabolism. In terms of biological role, mediates the conversion of L-galactonate to 2-dehydro-3-deoxy-L-galactonate, the second step in D-galacturonate catabolic process. This is L-galactonate dehydratase (lgd1) from Hypocrea jecorina (Trichoderma reesei).